The sequence spans 58 residues: MAQPKRRWSKQRTHKHRANWKIEAPNLVECPQCHEMKLPHRVCPSCGYYKNRKVVNED.

The protein belongs to the bacterial ribosomal protein bL32 family.

This chain is Large ribosomal subunit protein bL32, found in Caldicellulosiruptor saccharolyticus (strain ATCC 43494 / DSM 8903 / Tp8T 6331).